The primary structure comprises 574 residues: 4-oxocyclohexanecarboxylate 2-dehydrogenase (574 aa).

The protein belongs to the FAD-dependent oxidoreductase 2 family. Monomer. Homodimer. FAD is required as a cofactor.

The catalysed reaction is 4-oxocyclohexane-1-carboxylate + O2 = 4-oxocyclohex-2-ene-1-carboxylate + H2O2. Its activity is regulated as follows. Inhibited by 5,5'-dithio-bis(2- nitrobenzoate) and N-bromosuccinimide, but not by thiol and chelating reagents. Desaturase involved in a cyclohexanecarboxylate (CHCA) degradation pathway. Catalyzes the conversion of 4-oxocyclohexanecarboxylate (4-oxoCHCA) to 4-oxocyclohexenecarboxylate. Is highly specific for 4-oxocyclohexanecarboxylic acid and shows only slight activity with 4-oxo-2-methylcyclohex-2-enecarboxylic acid. In Sinomonas cyclohexanicum (Corynebacterium cyclohexanicum), this protein is 4-oxocyclohexanecarboxylate 2-dehydrogenase.